Reading from the N-terminus, the 1377-residue chain is DNA-directed RNA polymerase subunit beta (1377 aa).

It belongs to the RNA polymerase beta chain family. The RNAP catalytic core consists of 2 alpha, 1 beta, 1 beta' and 1 omega subunit. When a sigma factor is associated with the core the holoenzyme is formed, which can initiate transcription.

It catalyses the reaction RNA(n) + a ribonucleoside 5'-triphosphate = RNA(n+1) + diphosphate. Functionally, DNA-dependent RNA polymerase catalyzes the transcription of DNA into RNA using the four ribonucleoside triphosphates as substrates. The protein is DNA-directed RNA polymerase subunit beta of Campylobacter lari (strain RM2100 / D67 / ATCC BAA-1060).